The primary structure comprises 94 residues: Exodeoxyribonuclease 7 small subunit (94 aa).

It belongs to the XseB family. Heterooligomer composed of large and small subunits.

The protein localises to the cytoplasm. The catalysed reaction is Exonucleolytic cleavage in either 5'- to 3'- or 3'- to 5'-direction to yield nucleoside 5'-phosphates.. In terms of biological role, bidirectionally degrades single-stranded DNA into large acid-insoluble oligonucleotides, which are then degraded further into small acid-soluble oligonucleotides. In Trichormus variabilis (strain ATCC 29413 / PCC 7937) (Anabaena variabilis), this protein is Exodeoxyribonuclease 7 small subunit.